Here is a 134-residue protein sequence, read N- to C-terminus: MSWQAYVDDHLMCDIEGHEDHRLTAAAIVGHDGSVWAQSATFPQFKPEEMNGIMTDFNEPGHLAPTGLHLGGTKYMVIQGEAGAVIRGKKGSGGITIKKTGQALVFGIYKEPVTPGQCNMVVERLGDYLLEQGL.

An intrachain disulfide couples Cys-13 to Cys-118. Positions 84 to 100 match the Involved in PIP2 interaction motif; it reads AVIRGKKGSGGITIKKT. Thr-114 bears the Phosphothreonine mark.

It belongs to the profilin family. As to quaternary structure, occurs in many kinds of cells as a complex with monomeric actin in a 1:1 ratio. In terms of processing, phosphorylated by MAP kinases.

The protein resides in the cytoplasm. Its subcellular location is the cytoskeleton. Functionally, binds to actin and affects the structure of the cytoskeleton. At high concentrations, profilin prevents the polymerization of actin, whereas it enhances it at low concentrations. This chain is Profilin-4, found in Olea europaea (Common olive).